Consider the following 126-residue polypeptide: Large ribosomal subunit protein bL17 (126 aa).

Belongs to the bacterial ribosomal protein bL17 family. In terms of assembly, part of the 50S ribosomal subunit. Contacts protein L32.

The sequence is that of Large ribosomal subunit protein bL17 from Xylella fastidiosa (strain Temecula1 / ATCC 700964).